The sequence spans 245 residues: 23S rRNA (guanosine-2'-O-)-methyltransferase RlmB (245 aa).

S-adenosyl-L-methionine contacts are provided by G197, I217, and L226.

The protein belongs to the class IV-like SAM-binding methyltransferase superfamily. RNA methyltransferase TrmH family. RlmB subfamily.

It localises to the cytoplasm. It carries out the reaction guanosine(2251) in 23S rRNA + S-adenosyl-L-methionine = 2'-O-methylguanosine(2251) in 23S rRNA + S-adenosyl-L-homocysteine + H(+). In terms of biological role, specifically methylates the ribose of guanosine 2251 in 23S rRNA. The polypeptide is 23S rRNA (guanosine-2'-O-)-methyltransferase RlmB (Pasteurella multocida (strain Pm70)).